A 234-amino-acid chain; its full sequence is Large ribosomal subunit protein uL1 (234 aa).

The protein belongs to the universal ribosomal protein uL1 family. As to quaternary structure, part of the 50S ribosomal subunit.

In terms of biological role, binds directly to 23S rRNA. The L1 stalk is quite mobile in the ribosome, and is involved in E site tRNA release. Functionally, protein L1 is also a translational repressor protein, it controls the translation of the L11 operon by binding to its mRNA. This chain is Large ribosomal subunit protein uL1, found in Vibrio atlanticus (strain LGP32) (Vibrio splendidus (strain Mel32)).